The chain runs to 108 residues: Cytochrome c6 (108 aa).

The first 23 residues, 1 to 23 (MRLLFAFFIICHIFTNNVQLTFA), serve as a signal peptide directing secretion. Heme c-binding residues include C37, C40, H41, and M81.

Belongs to the cytochrome c family. PetJ subfamily. As to quaternary structure, monomer. Binds 1 heme c group covalently per subunit.

The protein localises to the plastid. It is found in the chloroplast thylakoid lumen. Functions as an electron carrier between membrane-bound cytochrome b6-f and photosystem I in oxygenic photosynthesis. In Gracilaria tenuistipitata var. liui (Red alga), this protein is Cytochrome c6.